The chain runs to 30 residues: Cyclotide hyen-C (30 aa).

The cyclopeptide (Gly-Asn) cross-link spans 1–30 (GTHPCQETCVTSTRCSTQGCHCNWPICFKN). 3 cysteine pairs are disulfide-bonded: Cys-5–Cys-20, Cys-9–Cys-22, and Cys-15–Cys-27.

Post-translationally, this is a cyclic peptide. As to expression, detected in stems (at protein level).

Its function is as follows. Probably participates in a plant defense mechanism. Does not display any cytotoxic activity towards K562, HeLa, MCF-7, HUVEC or red blood cells. Does not bind to phospholipd membranes containing 1-palmitoyl 2-oleoyl phosphatidylcholine (POPC) or 1-palmitoyl-2-oleophosphatidylethanolamine (POPE). This is Cyclotide hyen-C from Pigea enneasperma (Spade flower).